Reading from the N-terminus, the 616-residue chain is MMVKLRNLVLFFMLLTVVAHILLYTDPAASFKTPFSKRDFLEDVTALTFNSDENRLNLLPRESPAVLRGGLVGAVYSDKNSRRLDQLSARVLSATDDDTHSHTDISIKQVTHDAASDSHINRENMHVQLTQQTSEKVDEQPEPNAFGAKKDTGNVLMPDAQVRHLKDQLIRAKVYLSLPSAKANAHFVRELRLRIKEVQRALADASKDSDLPKTAIEKLKAMEQTLAKGKQIQDDCSTVVKKLRAMLHSADEQLRVHKKQTMFLTQLTAKTIPKGLHCLPLRLTTDYYALNSSEQQFPNQEKLEDTQLYHYALFSDNVLATSVVVNSTITNAKHPLKHVFHIVTDRLNYAAMRMWFLDNPPGKATIQVQNVEEFTWLNSSYSPVLKQLSSRSMIDYYFRAHHTNSDTNLKFRNPKYLSILNHLRFYLPEIFPKLSKVLFLDDDIVVQKDLSGLWSVDLKGNVNGAVETCGESFHRFDRYLNFSNPLISKNFDPRACGWAYGMNVFDLDEWKRQNITEVYHRWQDLNQDRELWKLGTLPPGLITFWRRTYPLDRKWHILGLGYNPSVNQRDIERAAVIHYNGNLKPWLEIGIPRYRGFWSKHVDYEHVYLRECNINP.

At 1–6 (MMVKLR) the chain is on the cytoplasmic side. The chain crosses the membrane as a helical; Signal-anchor for type II membrane protein span at residues 7–29 (NLVLFFMLLTVVAHILLYTDPAA). Over 30–616 (SFKTPFSKRD…VYLRECNINP (587 aa)) the chain is Lumenal. The tract at residues 132-152 (QTSEKVDEQPEPNAFGAKKDT) is disordered. N-linked (GlcNAc...) asparagine glycosylation is found at asparagine 291, asparagine 326, asparagine 378, asparagine 481, and asparagine 514.

The protein belongs to the glycosyltransferase 8 family. Expressed in roots, inflorescences, siliques, leaves and stems.

The protein resides in the golgi apparatus membrane. Its pathway is glycan metabolism; pectin biosynthesis. May be involved in pectin and/or xylans biosynthesis in cell walls. The sequence is that of Probable galacturonosyltransferase 4 (GAUT4) from Arabidopsis thaliana (Mouse-ear cress).